The primary structure comprises 305 residues: Acetaldehyde dehydrogenase (305 aa).

Ser13 to Ile16 is a binding site for NAD(+). Catalysis depends on Cys128, which acts as the Acyl-thioester intermediate. NAD(+) contacts are provided by residues Ser159–Asn167 and Asn278.

The protein belongs to the acetaldehyde dehydrogenase family.

It catalyses the reaction acetaldehyde + NAD(+) + CoA = acetyl-CoA + NADH + H(+). The protein is Acetaldehyde dehydrogenase of Chloroflexus aurantiacus (strain ATCC 29366 / DSM 635 / J-10-fl).